A 119-amino-acid polypeptide reads, in one-letter code: MGVRVAQPAAKQFVVLQQVEVLYGVVSQVALLHDAELLVVFDQLWQQFALAAHLFKHVAQVAAGHLALLELFCQLTNVVLVAAPRARLDQLRQLVLQAPVLLAAKRCEREHWLDQRRHL.

This is an uncharacterized protein from Orgyia pseudotsugata (Douglas-fir tussock moth).